We begin with the raw amino-acid sequence, 2030 residues long: Dedicator of cytokinesis protein 3 (2030 aa).

In terms of domain architecture, SH3 spans 6–67 (EEEKYGVVIC…PANYIHLKKA (62 aa)). In terms of domain architecture, C2 DOCK-type spans 421–599 (RNDLYLTLEK…ESFFISTQLS (179 aa)). A DOCKER domain is found at 1228–1635 (KSEINKEEMY…LYHEFPGLDK (408 aa)). 4 disordered regions span residues 1641–1662 (SGTS…PESI), 1734–1771 (SSSQ…SLPD), 1849–1927 (DTPP…ADED), and 1951–2030 (QPCR…RGEQ). A Phosphoserine modification is found at Ser-1658. Residues 1734–1754 (SSSQASPSSSSLSSTHSAPSQ) show a composition bias toward low complexity. Over residues 1755–1765 (MITSAPSSARG) the composition is skewed to polar residues. A compositionally biased stretch (low complexity) spans 1880-1902 (GSNSTLSGSASSGVSSLSESNFG). A compositionally biased stretch (pro residues) spans 1967-1977 (PMDPPALPPKP). The short motif at 1970–1976 (PPALPPK) is the SH3-binding element. Basic and acidic residues-rich tracts occupy residues 1984 to 2001 (ALEH…ERPR) and 2014 to 2030 (AKEE…RGEQ).

Belongs to the DOCK family. As to quaternary structure, interacts with presenilin proteins PSEN1 and PSEN2. Interacts with CRK. In terms of tissue distribution, in normal brains, it is localized in the neuropil, and occasionally in the pyramidal cells, while in Alzheimer disease brains, it is associated with neurofibrillary tangles.

Its subcellular location is the cytoplasm. Its function is as follows. Potential guanine nucleotide exchange factor (GEF). GEF proteins activate some small GTPases by exchanging bound GDP for free GTP. Its interaction with presenilin proteins as well as its ability to stimulate Tau/MAPT phosphorylation suggest that it may be involved in Alzheimer disease. Ectopic expression in nerve cells decreases the secretion of amyloid-beta APBA1 protein and lowers the rate of cell-substratum adhesion, suggesting that it may affect the function of some small GTPase involved in the regulation of actin cytoskeleton or cell adhesion receptors. The polypeptide is Dedicator of cytokinesis protein 3 (DOCK3) (Homo sapiens (Human)).